The chain runs to 393 residues: MSKSNPSEVKLAVPTSGGFSGLKSLNLQVFVMIAAIIAIMLFFTWTTDGAYLSARNVSNLLRQTAITGILAVGMVFVIISAEIDLSVGSMMGLLGGVAAICDVWLGWPLPLTIIVTLVLGLLLGAWNGWWVAYRKVPSFIVTLAGMLAFRGILIGITNGTTVSPTSAAMSQIGQSYLPASTGFIIGALGLMAFVGWQWRGRMRRQALGLQSPASTAVVGRQALTAIIVLGAIWLLNDYRGVPTPVLLLTLLLLGGMFMATRTAFGRRIYAIGGNLEAARLSGINVERTKLAVFAINGLMVAIAGLILSSRLGAGSPSAGNIAELDAIAACVIGGTSLAGGVGSVAGAVMGAFIMASLDNGMSMMDVPTFWQYIVKGAILLLAVWMDSATKRRS.

At 1-24 (MSKSNPSEVKLAVPTSGGFSGLKS) the chain is on the periplasmic side. The helical transmembrane segment at 25-45 (LNLQVFVMIAAIIAIMLFFTW) threads the bilayer. At 46-64 (TTDGAYLSARNVSNLLRQT) the chain is on the cytoplasmic side. The chain crosses the membrane as a helical span at residues 65-85 (AITGILAVGMVFVIISAEIDL). Residues 86–102 (SVGSMMGLLGGVAAICD) lie on the Periplasmic side of the membrane. A helical transmembrane segment spans residues 103–123 (VWLGWPLPLTIIVTLVLGLLL). Residues 124–135 (GAWNGWWVAYRK) lie on the Cytoplasmic side of the membrane. A helical membrane pass occupies residues 136–156 (VPSFIVTLAGMLAFRGILIGI). The Periplasmic portion of the chain corresponds to 157–175 (TNGTTVSPTSAAMSQIGQS). The chain crosses the membrane as a helical span at residues 176–196 (YLPASTGFIIGALGLMAFVGW). The Cytoplasmic portion of the chain corresponds to 197–214 (QWRGRMRRQALGLQSPAS). A helical membrane pass occupies residues 215–235 (TAVVGRQALTAIIVLGAIWLL). Residues 236 to 239 (NDYR) lie on the Periplasmic side of the membrane. The helical transmembrane segment at 240–260 (GVPTPVLLLTLLLLGGMFMAT) threads the bilayer. Over 261 to 287 (RTAFGRRIYAIGGNLEAARLSGINVER) the chain is Cytoplasmic. Residues 288–308 (TKLAVFAINGLMVAIAGLILS) traverse the membrane as a helical segment. The Periplasmic portion of the chain corresponds to 309-312 (SRLG). Residues 313-333 (AGSPSAGNIAELDAIAACVIG) form a helical membrane-spanning segment. Residues 334 to 336 (GTS) are Cytoplasmic-facing. Residues 337-357 (LAGGVGSVAGAVMGAFIMASL) traverse the membrane as a helical segment. The Periplasmic portion of the chain corresponds to 358–365 (DNGMSMMD). Residues 366-386 (VPTFWQYIVKGAILLLAVWMD) form a helical membrane-spanning segment. At 387–393 (SATKRRS) the chain is on the cytoplasmic side.

The protein belongs to the binding-protein-dependent transport system permease family. AraH/RbsC subfamily.

The protein localises to the cell inner membrane. Functionally, part of the binding-protein-dependent transport system for D-xylose. Probably responsible for the translocation of the substrate across the membrane. This is Xylose transport system permease protein XylH (xylH) from Escherichia coli O6:H1 (strain CFT073 / ATCC 700928 / UPEC).